Here is a 159-residue protein sequence, read N- to C-terminus: uncharacterized protein (159 aa).

This is an uncharacterized protein from Schizosaccharomyces pombe (strain 972 / ATCC 24843) (Fission yeast).